A 384-amino-acid polypeptide reads, in one-letter code: Putative dioxygenase SSO1533 (384 aa).

Fe cation is bound by residues histidine 296, glutamate 302, and histidine 332.

The protein belongs to the homogentisate dioxygenase family. Fe cation serves as cofactor.

This Saccharolobus solfataricus (strain ATCC 35092 / DSM 1617 / JCM 11322 / P2) (Sulfolobus solfataricus) protein is Putative dioxygenase SSO1533.